Here is a 1432-residue protein sequence, read N- to C-terminus: ABC transporter asL7 (1432 aa).

Residues 1–20 (MFDTTKLQSSTQDGSTSSVT) are compositionally biased toward polar residues. Residues 1–36 (MFDTTKLQSSTQDGSTSSVTGEPIFGANDPNSELNP) form a disordered region. Residues 91–341 (LALPGMLIRN…FERLGFECPS (251 aa)) form the ABC transporter 1 domain. A glycan (N-linked (GlcNAc...) asparagine) is linked at N265. 6 helical membrane-spanning segments follow: residues 450–470 (PTIV…SLFF), 484–504 (VVLF…VMTL), 530–550 (VLMD…VFYF), 559–579 (GNFF…SGIF), 597–617 (MIPA…MVPI), and 702–722 (IGIV…TSEY). The ABC transporter 2 domain occupies 786-1029 (FHWRNVCYDI…TLVEYFERKA (244 aa)). 822–829 (GVSGAGKT) provides a ligand contact to ATP. N-linked (GlcNAc...) asparagine glycosylation is present at N1017. A disordered region spans residues 1076–1095 (LSRLREHGSQSNSHDSEKSE). The next 6 helical transmembrane spans lie at 1135 to 1155 (FALC…SPLS), 1166 to 1186 (VFQL…QFII), 1215 to 1235 (IPYY…PIGL), 1251 to 1271 (LMWL…HFCI), 1279 to 1299 (AGAN…GALI), and 1317 to 1337 (LSYL…VTCA). Residue N1371 is glycosylated (N-linked (GlcNAc...) asparagine). Residues 1402–1422 (FGIIWVYVIFNISAAITLYWV) traverse the membrane as a helical segment.

Belongs to the ABC transporter superfamily. ABCG family. PDR (TC 3.A.1.205) subfamily.

Its subcellular location is the cell membrane. In terms of biological role, ABC transporter; part of the gene cluster that mediates the biosynthesis of xenovulene A, an unusual meroterpenoid that has potent inhibitory effects on the human gamma-aminobutyrate A (GABAA) benzodiazepine receptor. The chain is ABC transporter asL7 from Sarocladium schorii (Acremonium strictum (strain IMI 501407)).